The sequence spans 656 residues: Chaperone protein DnaK (656 aa).

Residues 590–605 show a composition bias toward gly residues; it reads GGAAGGAAGGAAGGAA. A disordered region spans residues 590 to 656; the sequence is GGAAGGAAGG…DGQPKPGPAA (67 aa). A compositionally biased stretch (low complexity) spans 606 to 621; sequence GDAAGAAGDSTGDAAG. The segment covering 622-635 has biased composition (gly residues); it reads AAGGPSEGPAGDAG.

This sequence belongs to the heat shock protein 70 family.

Acts as a chaperone. In Cenarchaeum symbiosum (strain A), this protein is Chaperone protein DnaK.